We begin with the raw amino-acid sequence, 198 residues long: CASP-like protein 1U1 (198 aa).

The Cytoplasmic portion of the chain corresponds to 1–30 (MSDTPVVVIPRKGYVDGHHGYHHSYHSGLN). A helical membrane pass occupies residues 31–51 (LLLRLLQAFATAAAVIVMLLA). Residues 52 to 73 (TQTEFTRYGEVRGRWRDYPAYK) lie on the Extracellular side of the membrane. A helical transmembrane segment spans residues 74–94 (WFIIANAVVFVYALLATLVAC). The Cytoplasmic segment spans residues 95–117 (CALIARRGPLSYSPSAWLTFLLD). The chain crosses the membrane as a helical span at residues 118 to 138 (FVAASALMSAASAALAVALIA). Topologically, residues 139–165 (RNGQNLQGQHYWPTFCNYVTRFCDYAQ) are extracellular. The helical transmembrane segment at 166 to 186 (GAIIASFCGFGLLALSTLLAA) threads the bilayer. At 187 to 198 (SALHHLAWHRLH) the chain is on the cytoplasmic side.

It belongs to the Casparian strip membrane proteins (CASP) family. As to quaternary structure, homodimer and heterodimers.

The protein localises to the cell membrane. The chain is CASP-like protein 1U1 from Physcomitrium patens (Spreading-leaved earth moss).